We begin with the raw amino-acid sequence, 829 residues long: Probable beta-glucosidase H (829 aa).

A glycan (N-linked (GlcNAc...) asparagine) is linked at Asn13. Residue Asp225 is part of the active site. Asn304, Asn473, Asn602, Asn627, and Asn664 each carry an N-linked (GlcNAc...) asparagine glycan. The PA14 domain maps to 389-548 (RMLSNAVIHF…DPEQMVANAV (160 aa)).

Belongs to the glycosyl hydrolase 3 family.

The protein localises to the secreted. It carries out the reaction Hydrolysis of terminal, non-reducing beta-D-glucosyl residues with release of beta-D-glucose.. It functions in the pathway glycan metabolism; cellulose degradation. In terms of biological role, beta-glucosidases are one of a number of cellulolytic enzymes involved in the degradation of cellulosic biomass. Catalyzes the last step releasing glucose from the inhibitory cellobiose. The chain is Probable beta-glucosidase H (bglH) from Neosartorya fischeri (strain ATCC 1020 / DSM 3700 / CBS 544.65 / FGSC A1164 / JCM 1740 / NRRL 181 / WB 181) (Aspergillus fischerianus).